Here is a 365-residue protein sequence, read N- to C-terminus: Probable L-tyrosine/L-aspartate decarboxylase (365 aa).

The residue at position 224 (lysine 224) is an N6-(pyridoxal phosphate)lysine.

This sequence belongs to the group II decarboxylase family. MfnA subfamily. Pyridoxal 5'-phosphate serves as cofactor.

It carries out the reaction L-tyrosine + H(+) = tyramine + CO2. The enzyme catalyses L-aspartate + H(+) = beta-alanine + CO2. It functions in the pathway cofactor biosynthesis; methanofuran biosynthesis. The protein operates within cofactor biosynthesis; coenzyme A biosynthesis. Functionally, catalyzes the decarboxylation of L-tyrosine to produce tyramine for methanofuran biosynthesis. Can also catalyze the decarboxylation of L-aspartate to produce beta-alanine for coenzyme A (CoA) biosynthesis. The protein is Probable L-tyrosine/L-aspartate decarboxylase of Methanoculleus marisnigri (strain ATCC 35101 / DSM 1498 / JR1).